Reading from the N-terminus, the 473-residue chain is Fumarate hydratase class II (473 aa).

Substrate contacts are provided by residues 105-107 (SGT), 130-133 (HPND), 140-142 (SSN), and Thr188. The active-site Proton donor/acceptor is His189. The active site involves Ser319. Residues Ser320 and 325-327 (KVN) contribute to the substrate site.

This sequence belongs to the class-II fumarase/aspartase family. Fumarase subfamily. In terms of assembly, homotetramer.

Its subcellular location is the cytoplasm. It catalyses the reaction (S)-malate = fumarate + H2O. The protein operates within carbohydrate metabolism; tricarboxylic acid cycle; (S)-malate from fumarate: step 1/1. Functionally, involved in the TCA cycle. Catalyzes the stereospecific interconversion of fumarate to L-malate. The sequence is that of Fumarate hydratase class II from Xylella fastidiosa (strain Temecula1 / ATCC 700964).